We begin with the raw amino-acid sequence, 185 residues long: Transcription termination/antitermination protein NusG (185 aa).

In terms of domain architecture, KOW spans P133 to L161.

This sequence belongs to the NusG family.

Its function is as follows. Participates in transcription elongation, termination and antitermination. The protein is Transcription termination/antitermination protein NusG of Haemophilus influenzae (strain ATCC 51907 / DSM 11121 / KW20 / Rd).